The primary structure comprises 403 residues: MISSLRGMNDILSEDYERFTHFITVATKIAQRYGFHFIETPLLEETALFKRSVGESSDIVGKEMYQFVDKGENDVCLRPEGTAGVVRAFVQKKLDRAGGIHRFFYHGAMFRYERPQKGRLRQFHQFGVESFGESSVYEDASMIMMASDILKELGIGYRLQLNSLGCNECMPPYREKLINFVTKHKDEICEDCTRRVETNPIRVLDCKNEKCQSIYTEAPKLLNCLCSTCESDFTTLKMILKQNEIDFEIDTNLVRGLDYYSKTAFEFVSDNIGSQSAIAGGGRYDRLVEFLDGRPTPAVGFAMGIERLMELIIMPEAKKDGYYLGAMDDEALDMIVKIAQKKRKSDIVILEYKTKNLKNHLKAADKSNAKYCAVIGSNEIKDGTIWVKNLEDKTEKTILSELF.

This sequence belongs to the class-II aminoacyl-tRNA synthetase family. In terms of assembly, homodimer.

Its subcellular location is the cytoplasm. The enzyme catalyses tRNA(His) + L-histidine + ATP = L-histidyl-tRNA(His) + AMP + diphosphate + H(+). The protein is Histidine--tRNA ligase of Sulfurimonas denitrificans (strain ATCC 33889 / DSM 1251) (Thiomicrospira denitrificans (strain ATCC 33889 / DSM 1251)).